The sequence spans 426 residues: 4-hydroxy-3-methylbut-2-en-1-yl diphosphate synthase (flavodoxin) (426 aa).

Positions 310, 313, 356, and 363 each coordinate [4Fe-4S] cluster.

The protein belongs to the IspG family. Requires [4Fe-4S] cluster as cofactor.

It carries out the reaction (2E)-4-hydroxy-3-methylbut-2-enyl diphosphate + oxidized [flavodoxin] + H2O + 2 H(+) = 2-C-methyl-D-erythritol 2,4-cyclic diphosphate + reduced [flavodoxin]. Its pathway is isoprenoid biosynthesis; isopentenyl diphosphate biosynthesis via DXP pathway; isopentenyl diphosphate from 1-deoxy-D-xylulose 5-phosphate: step 5/6. Functionally, converts 2C-methyl-D-erythritol 2,4-cyclodiphosphate (ME-2,4cPP) into 1-hydroxy-2-methyl-2-(E)-butenyl 4-diphosphate. In Rhodopseudomonas palustris (strain BisA53), this protein is 4-hydroxy-3-methylbut-2-en-1-yl diphosphate synthase (flavodoxin).